An 820-amino-acid chain; its full sequence is Phosphoenolpyruvate synthase (820 aa).

Histidine 438 acts as the Tele-phosphohistidine intermediate in catalysis. The substrate site is built by arginine 539, arginine 587, glutamate 689, glycine 710, serine 711, asparagine 712, and aspartate 713. Glutamate 689 serves as a coordination point for Mg(2+). Aspartate 713 serves as a coordination point for Mg(2+). Cysteine 762 (proton donor) is an active-site residue.

Belongs to the PEP-utilizing enzyme family. Mg(2+) serves as cofactor.

The catalysed reaction is pyruvate + ATP + H2O = phosphoenolpyruvate + AMP + phosphate + 2 H(+). It participates in carbohydrate biosynthesis; gluconeogenesis. Catalyzes the phosphorylation of pyruvate to phosphoenolpyruvate. The chain is Phosphoenolpyruvate synthase (ppsA) from Aeropyrum pernix (strain ATCC 700893 / DSM 11879 / JCM 9820 / NBRC 100138 / K1).